The chain runs to 617 residues: Electron transfer flavoprotein-ubiquinone oxidoreductase, mitochondrial (617 aa).

The transit peptide at 1–33 directs the protein to the mitochondrion; that stretch reads MMVPLAKLASPAYQCFHALKIKKNYLPLCATRW. 75-80 provides a ligand contact to FAD; it reads GAGPAG. K96 is subject to N6-acetyllysine. Residues 109–130 lie within the membrane without spanning it; sequence IGAHTLSGACLDPRAFEELFPD. K132 and K223 each carry N6-acetyllysine. Residues G305 and G306 each contribute to the a ubiquinone site. K357 is modified (N6-acetyllysine). Residues 428-447 lie within the membrane without spanning it; it reads IGLHVTEYEDNLKNSWVWKE. Residue S551 is modified to Phosphoserine. Positions 561, 586, 589, and 592 each coordinate [4Fe-4S] cluster. The 4Fe-4S ferredoxin-type domain maps to 577–606; it reads FRLQINAQNCVHCKTCDIKDPSQNINWVVP.

Monomer. Requires [4Fe-4S] cluster as cofactor. FAD serves as cofactor.

It is found in the mitochondrion inner membrane. It carries out the reaction a ubiquinone + reduced [electron-transfer flavoprotein] = a ubiquinol + oxidized [electron-transfer flavoprotein] + H(+). Accepts electrons from ETF and reduces ubiquinone. The sequence is that of Electron transfer flavoprotein-ubiquinone oxidoreductase, mitochondrial (ETFDH) from Sus scrofa (Pig).